The chain runs to 306 residues: MRKRKLGTSDLDISEVGLGCMSLGTEKNKALSILDEAIELGINYLDTADLYDRGRNEEIVGDAIQNRRHDIILATKAGNRWDDGSEGWYWDPSKAYIKEAVKKSLTRLKTDYIDLYQLHGGTIEDNIDETIEAFEELKQEGVIRYYGISSIRPNVIKEYVKKSNIVSIMMQFSLFDRRPEEWLPLLEEHQISVVARGPVAKGLLTEKPLDQASESMKQNGYLSYSFEELTNARKAMEEVAPDLSMTEKSLQYLLAQPAVASVITGASKIEQLRENIQAANARRLTEEEIKALQSHTKQDIYKAHRS.

Catalysis depends on Y51, which acts as the Proton donor. An NADP(+)-binding site is contributed by 197 to 207 (GPVAKGLLTEK).

This sequence belongs to the aldo/keto reductase family. Aldo/keto reductase 2 subfamily.

This is an uncharacterized protein from Bacillus subtilis (strain 168).